A 206-amino-acid polypeptide reads, in one-letter code: Triosephosphate isomerase (206 aa).

The active-site Electrophile is His76. Residue Glu146 is the Proton acceptor of the active site.

The protein belongs to the triosephosphate isomerase family. In terms of assembly, homodimer.

The enzyme catalyses D-glyceraldehyde 3-phosphate = dihydroxyacetone phosphate. It functions in the pathway carbohydrate biosynthesis; gluconeogenesis. It participates in carbohydrate degradation; glycolysis; D-glyceraldehyde 3-phosphate from glycerone phosphate: step 1/1. This Anopheles merus (Mosquito) protein is Triosephosphate isomerase (Tpi).